The chain runs to 479 residues: Phosphatidylinositol 4-kinase type 2-alpha (479 aa).

Methionine 1 carries the post-translational modification N-acetylmethionine. The tract at residues 1–74 is disordered; the sequence is MDETSPLVSP…ARGAAAQGQT (74 aa). Residues serine 5, serine 9, serine 44, serine 47, and serine 51 each carry the phosphoserine modification. Residues 31–45 show a composition bias toward low complexity; that stretch reads VPGGAVRVAAAAGSG. Residues 53–66 show a composition bias toward basic and acidic residues; that stretch reads GHDRERQPLLDRAR. The 330-residue stretch at 124–453 folds into the PI3K/PI4K catalytic domain; the sequence is CIFPERIYQG…VQMPPVIVET (330 aa). Residues 130 to 136 are G-loop; sequence IYQGSSG. ATP-binding positions include 131-137 and lysine 152; that span reads YQGSSGS. Residues 157–159 form an important for substrate binding region; that stretch reads EPY. The tract at residues 165–178 is important for interaction with membranes; that stretch reads KWTKWLQKLCCPCC. S-palmitoyl cysteine attachment occurs at residues cysteine 174, cysteine 175, cysteine 177, and cysteine 178. An ATP-binding site is contributed by 261–264; sequence QLFV. Residues 268 to 276 form an important for interaction with membranes region; that stretch reads KDADYWLRR. The segment at 305-313 is catalytic loop; it reads RNTDRGNDN. The segment at 344–364 is activation loop; it reads AIDNGLAFPLKHPDSWRAYPF. Position 346 (aspartate 346) interacts with ATP. The important for interaction with membranes stretch occupies residues 359–368; the sequence is WRAYPFYWAW. The residue at position 462 (serine 462) is a Phosphoserine.

It belongs to the PI3/PI4-kinase family. Type II PI4K subfamily. As to quaternary structure, associates with the BLOC-1 and the AP-3 complexes; the BLOC-1 complex is required for optimal binding of PI4K2A to the AP-3 complex. Interacts with BLOC1S5 and DTNBP1. Interacts with FOS; this interaction may enhance phosphatidylinositol phosphorylation activity. Interacts with ITCH. Interacts with ATG9A. In terms of processing, palmitoylated by ZDHHC3 and ZDHHC7 in the CCPCC motif. Palmitoylation is cholesterol-dependent, and required for TGN localization. Post-translationally, ubiquitinated by ITCH; this does not lead to proteasomal degradation. As to expression, widely expressed. Highest expression is observed in kidney, brain, heart, skeletal muscle, and placenta and lowest expression is observed in colon, thymus, and small intestine.

It localises to the golgi apparatus. Its subcellular location is the trans-Golgi network membrane. It is found in the membrane raft. The protein resides in the cell projection. The protein localises to the dendrite. It localises to the presynaptic cell membrane. Its subcellular location is the synapse. It is found in the synaptosome. The protein resides in the mitochondrion. The protein localises to the endosome. It localises to the endosome membrane. Its subcellular location is the cytoplasmic vesicle. It is found in the membrane. The protein resides in the cell membrane. The protein localises to the perikaryon. It localises to the neuron projection. It carries out the reaction a 1,2-diacyl-sn-glycero-3-phospho-(1D-myo-inositol) + ATP = a 1,2-diacyl-sn-glycero-3-phospho-(1D-myo-inositol 4-phosphate) + ADP + H(+). Membrane-bound phosphatidylinositol-4 kinase (PI4-kinase) that catalyzes the phosphorylation of phosphatidylinositol (PI) to phosphatidylinositol 4-phosphate (PI4P), a lipid that plays important roles in endocytosis, Golgi function, protein sorting and membrane trafficking and is required for prolonged survival of neurons. Besides, phosphorylation of phosphatidylinositol (PI) to phosphatidylinositol 4-phosphate (PI4P) is the first committed step in the generation of phosphatidylinositol 4,5-bisphosphate (PIP2), a precursor of the second messenger inositol 1,4,5-trisphosphate (InsP3). The polypeptide is Phosphatidylinositol 4-kinase type 2-alpha (PI4K2A) (Homo sapiens (Human)).